We begin with the raw amino-acid sequence, 181 residues long: Large ribosomal subunit protein uL5 (181 aa).

It belongs to the universal ribosomal protein uL5 family. In terms of assembly, part of the 50S ribosomal subunit; part of the 5S rRNA/L5/L18/L25 subcomplex. Contacts the 5S rRNA and the P site tRNA. Forms a bridge to the 30S subunit in the 70S ribosome.

Functionally, this is one of the proteins that bind and probably mediate the attachment of the 5S RNA into the large ribosomal subunit, where it forms part of the central protuberance. In the 70S ribosome it contacts protein S13 of the 30S subunit (bridge B1b), connecting the 2 subunits; this bridge is implicated in subunit movement. Contacts the P site tRNA; the 5S rRNA and some of its associated proteins might help stabilize positioning of ribosome-bound tRNAs. This chain is Large ribosomal subunit protein uL5, found in Helicobacter pylori (strain HPAG1).